A 144-amino-acid polypeptide reads, in one-letter code: MAAPSGSVNCEEFAEFQELLKVMRTIDDRIVHELNTTVPTASFAGKIDASQTCKQLYESLMAAHVSRDRVIKNCIAQTSAVVKSLREEREKNLDDLTLLKRLRKEQTKLKWMQSELNVEEVVNDRSWKVFNERCRVHFKPPKNE.

N-acetylalanine is present on A2. A coiled-coil region spans residues 82–120 (VKSLREEREKNLDDLTLLKRLRKEQTKLKWMQSELNVEE). K100 is subject to N6-acetyllysine.

It belongs to the MIX23 family.

The chain is Protein MIX23 from Mus musculus (Mouse).